Here is a 494-residue protein sequence, read N- to C-terminus: Monocarboxylate transporter 1 (494 aa).

Residues 1–22 lie on the Cytoplasmic side of the membrane; the sequence is MPPAIGGPVGYTPPDGGWGWAV. The helical transmembrane segment at 23–44 threads the bilayer; sequence VVGAFISIGFSYAFPKSITVFF. (S)-lactate is bound at residue lysine 38. Topologically, residues 45–55 are extracellular; sequence KEIEIIFSATT. Residues 56–80 traverse the membrane as a helical segment; sequence SEVSWISSIMLAVMYAGGPISSILV. Topologically, residues 81-84 are cytoplasmic; it reads NKYG. Residues 85 to 105 traverse the membrane as a helical segment; the sequence is SRPVMIAGGCLSGCGLIAASF. At 106-109 the chain is on the extracellular side; it reads CNTV. The helical transmembrane segment at 110 to 132 threads the bilayer; sequence QELYFCIGVIGGLGLAFNLNPAL. At 133–146 the chain is on the cytoplasmic side; it reads TMIGKYFYKKRPLA. The helical transmembrane segment at 147 to 169 threads the bilayer; the sequence is NGLAMAGSPVFLSTLAPLNQAFF. At 170-174 the chain is on the extracellular side; it reads GIFGW. A helical membrane pass occupies residues 175 to 194; that stretch reads RGSFLILGGLLLNCCVAGSL. Residues 195-254 are Cytoplasmic-facing; the sequence is MRPIGPQQGKVEKLKSKESLQEAGKSDANTDLIGGSPKGEKLSVFQTVNKFLDLSLFTHR. 3 positions are modified to phosphoserine: serine 210, serine 213, and serine 220. Threonine 224 is modified (phosphothreonine). Residue serine 230 is modified to Phosphoserine. The helical transmembrane segment at 255 to 281 threads the bilayer; sequence GFLLYLSGNVVMFFGLFTPLVFLSNYG. Residues 282-288 are Extracellular-facing; sequence KSKHFSS. Residues 289–310 traverse the membrane as a helical segment; it reads EKSAFLLSILAFVDMVARPSMG. Aspartate 302 serves as a coordination point for H(+). Residue arginine 306 coordinates (S)-lactate. At 311-321 the chain is on the cytoplasmic side; the sequence is LAANTRWIRPR. Residues 322–342 form a helical membrane-spanning segment; it reads VQYFFAASVVANGVCHLLAPL. The Extracellular portion of the chain corresponds to 343 to 346; sequence STTY. A helical transmembrane segment spans residues 347–368; sequence VGFCIYAGVFGFAFGWLSSVLF. At 369-382 the chain is on the cytoplasmic side; the sequence is ETLMDLVGPQRFSS. A helical transmembrane segment spans residues 383–403; sequence AVGLVTIVECCPVLLGPPLLG. At 404-414 the chain is on the extracellular side; sequence RLNDMYGDYKY. Residues 415 to 436 form a helical membrane-spanning segment; the sequence is TYWACGVILIIAGLYLFIGMGI. Residues 437–494 lie on the Cytoplasmic side of the membrane; that stretch reads NYRLVAKEQKAEEKKRDGKEDETSTDVDEKPKKTMKETQSPAPLQNSSGDPAEEESPV. Residues 446 to 472 are compositionally biased toward basic and acidic residues; the sequence is KAEEKKRDGKEDETSTDVDEKPKKTMK. A disordered region spans residues 446-494; sequence KAEEKKRDGKEDETSTDVDEKPKKTMKETQSPAPLQNSSGDPAEEESPV. Threonine 459 is subject to Phosphothreonine. Serine 460 bears the Phosphoserine mark. A Phosphothreonine modification is found at threonine 461. The span at 473-485 shows a compositional bias: polar residues; the sequence is ETQSPAPLQNSSG. Phosphoserine is present on residues serine 476, serine 483, serine 484, and serine 492.

Belongs to the major facilitator superfamily. Monocarboxylate porter (TC 2.A.1.13) family. As to quaternary structure, interacts with BSG. Interacts with EMB. Interaction with either BSG or EMB is required for expression at the cell membrane. In terms of tissue distribution, detected in erythrocytes (at protein level). Detected in brain, heart, kidney, lung, muscle, jejunum enterocytes and brain capillaries.

The protein localises to the cell membrane. It localises to the basolateral cell membrane. The protein resides in the apical cell membrane. The enzyme catalyses (S)-lactate(in) + H(+)(in) = (S)-lactate(out) + H(+)(out). It catalyses the reaction pyruvate(out) + H(+)(out) = pyruvate(in) + H(+)(in). It carries out the reaction acetoacetate(out) + H(+)(out) = acetoacetate(in) + H(+)(in). The catalysed reaction is (S)-3-hydroxybutanoate(out) + H(+)(out) = (S)-3-hydroxybutanoate(in) + H(+)(in). The enzyme catalyses (R)-3-hydroxybutanoate(out) + H(+)(out) = (R)-3-hydroxybutanoate(in) + H(+)(in). It catalyses the reaction 3-methyl-2-oxobutanoate(out) + H(+)(out) = 3-methyl-2-oxobutanoate(in) + H(+)(in). It carries out the reaction 4-methyl-2-oxopentanoate(out) + H(+)(out) = 4-methyl-2-oxopentanoate(in) + H(+)(in). Inhibited by stilbene disulfonates, such as di-isothiocyanostilbene disulfonate(DIDS), a cross-linking reagent that forms covalent linkages with lysine groups. Its function is as follows. Bidirectional proton-coupled monocarboxylate transporter. Catalyzes the rapid transport across the plasma membrane of many monocarboxylates such as lactate, pyruvate, acetate and the ketone bodies acetoacetate and beta-hydroxybutyrate, and thus contributes to the maintenance of intracellular pH. The transport direction is determined by the proton motive force and the concentration gradient of the substrate monocarboxylate. MCT1 is a major lactate exporter. Plays a role in cellular responses to a high-fat diet by modulating the cellular levels of lactate and pyruvate that contribute to the regulation of central metabolic pathways and insulin secretion, with concomitant effects on plasma insulin levels and blood glucose homeostasis. Facilitates the protonated monocarboxylate form of succinate export, that its transient protonation upon muscle cell acidification in exercising muscle and ischemic heart. Functions via alternate outward- and inward-open conformation states. Protonation and deprotonation of 302-Asp is essential for the conformational transition. This chain is Monocarboxylate transporter 1 (Slc16a1), found in Rattus norvegicus (Rat).